Reading from the N-terminus, the 276-residue chain is Large ribosomal subunit protein uL2 (276 aa).

The disordered stretch occupies residues 212–276 (NRHRGIRPQT…KLIISRKKHK (65 aa)). Positions 257 to 276 (YKTRKKKASDKLIISRKKHK) are enriched in basic residues.

It belongs to the universal ribosomal protein uL2 family. As to quaternary structure, part of the 50S ribosomal subunit. Forms a bridge to the 30S subunit in the 70S ribosome.

In terms of biological role, one of the primary rRNA binding proteins. Required for association of the 30S and 50S subunits to form the 70S ribosome, for tRNA binding and peptide bond formation. It has been suggested to have peptidyltransferase activity; this is somewhat controversial. Makes several contacts with the 16S rRNA in the 70S ribosome. This chain is Large ribosomal subunit protein uL2, found in Helicobacter acinonychis (strain Sheeba).